A 92-amino-acid chain; its full sequence is Small ribosomal subunit protein uS19 (92 aa).

This sequence belongs to the universal ribosomal protein uS19 family.

Functionally, protein S19 forms a complex with S13 that binds strongly to the 16S ribosomal RNA. This Yersinia pestis (strain Pestoides F) protein is Small ribosomal subunit protein uS19.